Here is a 348-residue protein sequence, read N- to C-terminus: WW domain binding protein 1-like (348 aa).

The chain crosses the membrane as a helical span at residues 42–62 (LWWFWLVWTVVIILSCCCVCH). Disordered regions lie at residues 111 to 253 (VVNR…RRFT) and 306 to 348 (CLSS…GSPS). Residues 134–155 (LPPPPQGGPPGGSPPGADPPPQ) show a composition bias toward pro residues. The span at 156–177 (GSQGAQSSPLSGPSRSSTRPPS) shows a compositional bias: low complexity. S177 is subject to Phosphoserine. Over residues 220–234 (SECKEELLKDSRSER) the composition is skewed to basic and acidic residues. The span at 331-348 (NTINEQDSPNSQHSGSPS) shows a compositional bias: polar residues.

Its subcellular location is the membrane. The polypeptide is WW domain binding protein 1-like (Wbp1l) (Mus musculus (Mouse)).